The following is a 24-amino-acid chain: Prokineticin 1-like protein (24 aa).

A disulfide bond links cysteine 7 and cysteine 19.

Expressed by the skin glands.

It localises to the secreted. In terms of biological role, stimulates insulin secretion by BRIN-BD11 cells in vitro. This chain is Prokineticin 1-like protein, found in Pelophylax saharicus (Sahara frog).